Consider the following 836-residue polypeptide: Tuftelin-interacting protein 11 (836 aa).

Over residues 1–13 (MSLSHLYRDGEGH) the composition is skewed to basic and acidic residues. Disordered stretches follow at residues 1–31 (MSLS…DWDL), 54–73 (WAER…RARD), and 85–136 (LKKG…AGGT). Residues 1–50 (MSLSHLYRDGEGHMDDDEDERENFEITDWDLQNEFNPNRQRHWQTKEEAT) are required for interaction with DHX15. Ser2 bears the Phosphoserine mark. Positions 14-28 (MDDDEDERENFEITD) are enriched in acidic residues. Over residues 54 to 64 (WAERDSDEERP) the composition is skewed to basic and acidic residues. 2 positions are modified to phosphoserine: Ser59 and Ser98. Acidic residues predominate over residues 91–102 (EEAELEDSDDEE). Basic and acidic residues predominate over residues 103–116 (KPVKQDEFPKDFGP). Position 144 is a phosphoserine (Ser144). Positions 149–195 (TKGIGQKLLQKMGYVPGRGLGKNAQGIINPIEAKQRKGKGAVGAYGS) constitute a G-patch domain. The disordered stretch occupies residues 183-236 (QRKGKGAVGAYGSERTTQSLQDFPVVDSEEEAEEEFQKELSQWRKDPSGSKKKP). Residue Ser210 is modified to Phosphoserine. Positions 217-231 (EFQKELSQWRKDPSG) are enriched in basic and acidic residues. Residues 699-704 (VKDKFN) carry the Nuclear localization signal motif. Residues 709 to 733 (IMNRAVSSNVGAYMQPGARENIAYL) form a required for nuclear speckle localization region.

It belongs to the TFP11/STIP family. As to quaternary structure, identified in the spliceosome C complex. Found in the Intron Large (IL) complex, a post-mRNA release spliceosomal complex containing the excised intron, U2, U5 and U6 snRNPs, and splicing factors. Interacts with TUFT1. Interacts with DHX15; indicative for a recruitment of DHX15 to the IL complex. Interacts with GCFC2.

The protein localises to the cytoplasm. The protein resides in the nucleus. In terms of biological role, involved in pre-mRNA splicing, specifically in spliceosome disassembly during late-stage splicing events. Intron turnover seems to proceed through reactions in two lariat-intron associated complexes termed Intron Large (IL) and Intron Small (IS). In cooperation with DHX15 seems to mediate the transition of the U2, U5 and U6 snRNP-containing IL complex to the snRNP-free IS complex leading to efficient debranching and turnover of excised introns. May play a role in the differentiation of ameloblasts and odontoblasts or in the forming of the enamel extracellular matrix. This is Tuftelin-interacting protein 11 (TFIP11) from Sus scrofa (Pig).